The sequence spans 643 residues: Threonine--tRNA ligase (643 aa).

The TGS domain maps to 1 to 61; it reads MPIITLPDGS…EQDATLEIIT (61 aa). The segment at 243-534 is catalytic; it reads DHRKIGKALD…ITEEYAGFFP (292 aa). Residues cysteine 334, histidine 385, and histidine 511 each contribute to the Zn(2+) site.

It belongs to the class-II aminoacyl-tRNA synthetase family. Homodimer. It depends on Zn(2+) as a cofactor.

It is found in the cytoplasm. The enzyme catalyses tRNA(Thr) + L-threonine + ATP = L-threonyl-tRNA(Thr) + AMP + diphosphate + H(+). Its function is as follows. Catalyzes the attachment of threonine to tRNA(Thr) in a two-step reaction: L-threonine is first activated by ATP to form Thr-AMP and then transferred to the acceptor end of tRNA(Thr). Also edits incorrectly charged L-seryl-tRNA(Thr). The polypeptide is Threonine--tRNA ligase (Haemophilus influenzae (strain PittEE)).